Reading from the N-terminus, the 473-residue chain is 3-isopropylmalate dehydratase large subunit (473 aa).

Residues cysteine 354, cysteine 414, and cysteine 417 each coordinate [4Fe-4S] cluster.

Belongs to the aconitase/IPM isomerase family. LeuC type 1 subfamily. As to quaternary structure, heterodimer of LeuC and LeuD. Requires [4Fe-4S] cluster as cofactor.

It catalyses the reaction (2R,3S)-3-isopropylmalate = (2S)-2-isopropylmalate. The protein operates within amino-acid biosynthesis; L-leucine biosynthesis; L-leucine from 3-methyl-2-oxobutanoate: step 2/4. Functionally, catalyzes the isomerization between 2-isopropylmalate and 3-isopropylmalate, via the formation of 2-isopropylmaleate. The protein is 3-isopropylmalate dehydratase large subunit of Mycobacterium bovis (strain ATCC BAA-935 / AF2122/97).